The following is a 94-amino-acid chain: Beta-diguetoxin-Dc1a (94 aa).

An N-terminal signal peptide occupies residues 1–17 (MKVFVVLLCLSLAAVYA). The propeptide occupies 18-38 (LEERLDKDADIMLDSPADMER). Cystine bridges form between Cys-50–Cys-63, Cys-57–Cys-77, Cys-62–Cys-91, and Cys-79–Cys-89.

Belongs to the neurotoxin 26 (DTX) family. Expressed by the venom gland.

It localises to the secreted. In terms of biological role, insecticidal toxin. This toxin promotes opening of insect Nav channels. The toxin binds to the S1-S2 and S3-S4 loops in the domain II voltage-sensor of insect Nav channels (i.e., receptor site 4). The American cockroach P.americana is largely resistant to the effects of this toxin due to an unusual sequence within the domain II S1-S2 loop. In vivo, paralyzes lepidopteran and dipteran larvae. Paralyzed insects ultimately die from secondary effects of starvation and dehydration. In Diguetia canities (Desert bush spider), this protein is Beta-diguetoxin-Dc1a.